The primary structure comprises 210 residues: Somatotropin (210 aa).

The first 22 residues, 1–22, serve as a signal peptide directing secretion; that stretch reads MGQVFLLMPVLLVSCFLSQGAA. His38 is a Zn(2+) binding site. A disulfide bond links Cys71 and Cys183. Glu192 is a Zn(2+) binding site. Cys200 and Cys208 are oxidised to a cystine.

The protein belongs to the somatotropin/prolactin family.

It is found in the secreted. In terms of biological role, growth hormone plays an important role in growth control and is involved in the regulation of several anabolic processes. Implicated as an osmoregulatory substance important for seawater adaptation. This Oncorhynchus tshawytscha (Chinook salmon) protein is Somatotropin (gh).